We begin with the raw amino-acid sequence, 417 residues long: MDFKKLDPELWQAIANEEQRQQNNIELIASENIVSKNVLDAQGSVLTNKYAEGYPGRRYYGGCQFIDVVENLAIDRAKQLFGAKYVNVQPHSGSQANAAAYMSLVEPGDTIMGMDLAAGGHLTHGSPVNFSGKTYNFVSYGVDKKTEMLDYDEIARLAREHQPKLIVAGASAYSRIIDFSKFREIADEVGAKLMVDMAHIAGLVAVGLHPNPVPYADITTTTTHKTLRGPRGGMILTNDENLAKKINSNVFPGTQGGPLEHVIAGKAAAFGEALTPEFKEYGEQIIRNTQEMALCFADNEKARLVSNGSDNHLLLLDVRNFGLNGKEAEKLLDQVNITVNKNSIPFETLSPFKTSGIRIGTPAITSRGFNEEDSYQVAKLILTVLANKDDEQVLADVKRQVKELTDAHPIYAEYSIR.

Residues leucine 116 and 120–122 (GHL) each bind (6S)-5,6,7,8-tetrahydrofolate. Position 225 is an N6-(pyridoxal phosphate)lysine (lysine 225). 350 to 352 (SPF) is a (6S)-5,6,7,8-tetrahydrofolate binding site.

Belongs to the SHMT family. As to quaternary structure, homodimer. The cofactor is pyridoxal 5'-phosphate.

It localises to the cytoplasm. It carries out the reaction (6R)-5,10-methylene-5,6,7,8-tetrahydrofolate + glycine + H2O = (6S)-5,6,7,8-tetrahydrofolate + L-serine. Its pathway is one-carbon metabolism; tetrahydrofolate interconversion. It functions in the pathway amino-acid biosynthesis; glycine biosynthesis; glycine from L-serine: step 1/1. In terms of biological role, catalyzes the reversible interconversion of serine and glycine with tetrahydrofolate (THF) serving as the one-carbon carrier. This reaction serves as the major source of one-carbon groups required for the biosynthesis of purines, thymidylate, methionine, and other important biomolecules. Also exhibits THF-independent aldolase activity toward beta-hydroxyamino acids, producing glycine and aldehydes, via a retro-aldol mechanism. The chain is Serine hydroxymethyltransferase from Ligilactobacillus salivarius (strain UCC118) (Lactobacillus salivarius).